Reading from the N-terminus, the 186-residue chain is Peptidyl-tRNA hydrolase (186 aa).

A tRNA-binding site is contributed by Tyr-14. Catalysis depends on His-19, which acts as the Proton acceptor. Phe-64, Asn-66, and Asn-112 together coordinate tRNA.

This sequence belongs to the PTH family. Monomer.

The protein localises to the cytoplasm. It carries out the reaction an N-acyl-L-alpha-aminoacyl-tRNA + H2O = an N-acyl-L-amino acid + a tRNA + H(+). Hydrolyzes ribosome-free peptidyl-tRNAs (with 1 or more amino acids incorporated), which drop off the ribosome during protein synthesis, or as a result of ribosome stalling. Functionally, catalyzes the release of premature peptidyl moieties from peptidyl-tRNA molecules trapped in stalled 50S ribosomal subunits, and thus maintains levels of free tRNAs and 50S ribosomes. The protein is Peptidyl-tRNA hydrolase of Listeria monocytogenes serotype 4b (strain CLIP80459).